The primary structure comprises 345 residues: Anthranilate phosphoribosyltransferase (345 aa).

Residues Gly-84, 87–88, Thr-92, 94–97, 112–120, and Ser-124 contribute to the 5-phospho-alpha-D-ribose 1-diphosphate site; these read GD, NIST, and KHGGRSVSS. An anthranilate-binding site is contributed by Gly-84. Residue Ser-96 coordinates Mg(2+). Arg-170 serves as a coordination point for anthranilate. Positions 229 and 230 each coordinate Mg(2+).

It belongs to the anthranilate phosphoribosyltransferase family. As to quaternary structure, homodimer. The cofactor is Mg(2+).

It catalyses the reaction N-(5-phospho-beta-D-ribosyl)anthranilate + diphosphate = 5-phospho-alpha-D-ribose 1-diphosphate + anthranilate. Its pathway is amino-acid biosynthesis; L-tryptophan biosynthesis; L-tryptophan from chorismate: step 2/5. Functionally, catalyzes the transfer of the phosphoribosyl group of 5-phosphorylribose-1-pyrophosphate (PRPP) to anthranilate to yield N-(5'-phosphoribosyl)-anthranilate (PRA). This chain is Anthranilate phosphoribosyltransferase, found in Herminiimonas arsenicoxydans.